Reading from the N-terminus, the 154-residue chain is SsrA-binding protein (154 aa).

Belongs to the SmpB family.

It is found in the cytoplasm. In terms of biological role, required for rescue of stalled ribosomes mediated by trans-translation. Binds to transfer-messenger RNA (tmRNA), required for stable association of tmRNA with ribosomes. tmRNA and SmpB together mimic tRNA shape, replacing the anticodon stem-loop with SmpB. tmRNA is encoded by the ssrA gene; the 2 termini fold to resemble tRNA(Ala) and it encodes a 'tag peptide', a short internal open reading frame. During trans-translation Ala-aminoacylated tmRNA acts like a tRNA, entering the A-site of stalled ribosomes, displacing the stalled mRNA. The ribosome then switches to translate the ORF on the tmRNA; the nascent peptide is terminated with the 'tag peptide' encoded by the tmRNA and targeted for degradation. The ribosome is freed to recommence translation, which seems to be the essential function of trans-translation. This Staphylococcus aureus (strain USA300) protein is SsrA-binding protein.